A 102-amino-acid chain; its full sequence is Monothiol glutaredoxin-S6 (102 aa).

The Glutaredoxin domain occupies 1–101; sequence MESVRSLVED…AMLRRAGAIW (101 aa). Residue cysteine 21 participates in [2Fe-2S] cluster binding.

Belongs to the glutaredoxin family. CC-type subfamily.

Its subcellular location is the cytoplasm. Functionally, may only reduce GSH-thiol disulfides, but not protein disulfides. This chain is Monothiol glutaredoxin-S6 (GRXS6), found in Arabidopsis thaliana (Mouse-ear cress).